A 473-amino-acid chain; its full sequence is Phosphoglucosamine mutase (473 aa).

The Phosphoserine intermediate role is filled by Ser102. Residues Ser102, Asp248, Asp250, and Asp252 each contribute to the Mg(2+) site. Ser102 carries the post-translational modification Phosphoserine.

It belongs to the phosphohexose mutase family. The cofactor is Mg(2+). Post-translationally, activated by phosphorylation.

The catalysed reaction is alpha-D-glucosamine 1-phosphate = D-glucosamine 6-phosphate. In terms of biological role, catalyzes the conversion of glucosamine-6-phosphate to glucosamine-1-phosphate. This Rhodospirillum centenum (strain ATCC 51521 / SW) protein is Phosphoglucosamine mutase.